We begin with the raw amino-acid sequence, 214 residues long: Putative ras-related protein Rab-5B (214 aa).

Gly56 to Thr63 provides a ligand contact to GTP. The short motif at Thr77 to Phe85 is the Effector region element. GTP contacts are provided by residues Asp103 to Gln107 and Asn161 to Asp164.

This sequence belongs to the small GTPase superfamily. Rab family. In terms of processing, this sequence lacks the C-terminal cysteine motifs subject to isoprenylation in other Rab proteins.

The protein is Putative ras-related protein Rab-5B (rab5B) of Dictyostelium discoideum (Social amoeba).